Consider the following 968-residue polypeptide: MPFALGQRWISDTESELGLGTVVQVEGRMVTVLFPATGENRMFSRAEAPLTRVIYNPGDSVESHEGWSLAVSELTEKDGIVIYHGIHSETGEQVTLRETLLNHNIRFNKPQDRLFAGQIDRLDRFGVRYQCQMLRHKLASSDLLGLQGPRVGLIPHQMWIAHEVGRRYAPRVLLADEVGLGKTIEAGLIIHQQLLTGRAERILIIVPDTLRHQWLVEMLRRFNLRFSVFDEDRCVEAYADHDNPFYTEQLVICSLELLRKKKRLDQALDADWDLLVVDEAHHLEWTEEAPSRAYQVVEALSEVIPGVLLLTATPDQLGHESHFARLRLLDPDRFYDYDAFLAEEDSYKDVAIAAEALAGNTKLPDAAINSLTELLGEKDISPSIRLIQADGIDAEVQQAARSELLQELLDRHGTGRVLYRNSRASVKGFPKRFFNAYPHAMPDQYQTAARVSGMMGGHKSLEAKAAQALSPEKLYQEFEDNSASWWKFDPRVDWLIEFLKSHRSKKVLIIASQAETALSLEEALRTREGIQATVFHEGMSIIERDKAGAYFAQEEGGAQALICSEIGSEGRNFQFASHLVLFDLPLNPDLLEQRIGRLDRIGQKNDIQIHLPYLEDTAQERLMQWYHQGLNAFELTCPSGHVLYSEFAEDLLNVLAVDDSDELTNLLNHTQSRYKELKHAMEQGRDKLLEINSHGGEKAMAIVQRLAQNDGDTHLIGSVIRLWDIIGVDQEDKGENSIILRPSEHMMFPTYPGLPEDGVTVTFDRDTALSRDDIALITQEHPLVQTGLDLITGSETGTTSVAILKNKALPAGTLFLELIYMADASAPKSSQLYRYLPPTPIRVLLDKNGNDLSAKVDYASFDKQLSAVNRHIGGKLVTASQPILHPLFAKGEEYAQVVVDEMVAQAREKMTQQLSAERSRLESLKAVNPNIREEELEYLRNQMQELNTYLDASQLQLDAIRMVLVSHV.

One can recognise a Helicase ATP-binding domain in the interval 163-332 (EVGRRYAPRV…FARLRLLDPD (170 aa)). 176–183 (DEVGLGKT) lines the ATP pocket. Positions 278–281 (DEAH) match the DEAH box motif. The 165-residue stretch at 491–655 (RVDWLIEFLK…EFAEDLLNVL (165 aa)) folds into the Helicase C-terminal domain.

Belongs to the SNF2/RAD54 helicase family. RapA subfamily. Interacts with the RNAP. Has a higher affinity for the core RNAP than for the holoenzyme. Its ATPase activity is stimulated by binding to RNAP.

Functionally, transcription regulator that activates transcription by stimulating RNA polymerase (RNAP) recycling in case of stress conditions such as supercoiled DNA or high salt concentrations. Probably acts by releasing the RNAP, when it is trapped or immobilized on tightly supercoiled DNA. Does not activate transcription on linear DNA. Probably not involved in DNA repair. The protein is RNA polymerase-associated protein RapA of Shewanella baltica (strain OS155 / ATCC BAA-1091).